Consider the following 298-residue polypeptide: Tyrosine recombinase XerC (298 aa).

One can recognise a Core-binding (CB) domain in the interval 1-85; the sequence is MKPIAAFQEY…SLRSFYRYLT (85 aa). In terms of domain architecture, Tyr recombinase spans 106-291; that stretch reads HLPQFFYEAE…TMAHLKNEYM (186 aa). Catalysis depends on residues arginine 146, lysine 170, histidine 243, arginine 246, and histidine 269. Residue tyrosine 278 is the O-(3'-phospho-DNA)-tyrosine intermediate of the active site.

It belongs to the 'phage' integrase family. XerC subfamily. As to quaternary structure, forms a cyclic heterotetrameric complex composed of two molecules of XerC and two molecules of XerD.

It is found in the cytoplasm. Functionally, site-specific tyrosine recombinase, which acts by catalyzing the cutting and rejoining of the recombining DNA molecules. The XerC-XerD complex is essential to convert dimers of the bacterial chromosome into monomers to permit their segregation at cell division. It also contributes to the segregational stability of plasmids. The sequence is that of Tyrosine recombinase XerC from Lacticaseibacillus paracasei (strain ATCC 334 / BCRC 17002 / CCUG 31169 / CIP 107868 / KCTC 3260 / NRRL B-441) (Lactobacillus paracasei).